The following is a 905-amino-acid chain: Protein translocase subunit SecA (905 aa).

Residues Gln-89, 107-111 (GEGKT), and Asp-502 contribute to the ATP site. Residues 837 to 885 (EQTDVGDPILNDQNKKNSSTLWTPSQENKFVNPKDRNPSDSTTWGKVGR) are disordered. Residues 852–865 (KNSSTLWTPSQENK) are compositionally biased toward polar residues. Residues Cys-889, Cys-891, Cys-900, and His-901 each coordinate Zn(2+).

Belongs to the SecA family. As to quaternary structure, monomer and homodimer. Part of the essential Sec protein translocation apparatus which comprises SecA, SecYEG and auxiliary proteins SecDF-YajC and YidC. Zn(2+) serves as cofactor.

The protein localises to the cell inner membrane. Its subcellular location is the cytoplasm. The enzyme catalyses ATP + H2O + cellular proteinSide 1 = ADP + phosphate + cellular proteinSide 2.. In terms of biological role, part of the Sec protein translocase complex. Interacts with the SecYEG preprotein conducting channel. Has a central role in coupling the hydrolysis of ATP to the transfer of proteins into and across the cell membrane, serving both as a receptor for the preprotein-SecB complex and as an ATP-driven molecular motor driving the stepwise translocation of polypeptide chains across the membrane. The chain is Protein translocase subunit SecA from Bartonella henselae (strain ATCC 49882 / DSM 28221 / CCUG 30454 / Houston 1) (Rochalimaea henselae).